The chain runs to 1912 residues: Chromodomain-helicase-DNA-binding protein 4 (1912 aa).

The disordered stretch occupies residues 1 to 157 (MASGLGSPSP…PKSSAQLLED (157 aa)). The span at 35–45 (NEEDPEEDLSE) shows a compositional bias: acidic residues. A Phosphoserine modification is found at S44. Over residues 113-131 (GKKKKKKLGPKKEKKSKSK) the composition is skewed to basic residues. Residue K133 forms a Glycyl lysine isopeptide (Lys-Gly) (interchain with G-Cter in SUMO2) linkage. The span at 135–145 (EEEEEDDDDDS) shows a compositional bias: acidic residues. Glycyl lysine isopeptide (Lys-Gly) (interchain with G-Cter in SUMO2) cross-links involve residues K146, K179, and K297. Residues 243–360 (ATEVAPPPPP…KKKKGEEEVT (118 aa)) are disordered. The short motif at 295 to 298 (KIKL) is the KIKL element. Position 303 is a phosphoserine (S303). A Glycyl lysine isopeptide (Lys-Gly) (interchain with G-Cter in SUMO2) cross-link involves residue K304. Phosphoserine is present on residues S308, S309, S310, and S319. Positions 311 to 323 (EDDDLDVESDFDD) are enriched in acidic residues. Over residues 340 to 353 (SRSRKKLRTTKKKK) the composition is skewed to basic residues. T367 carries the post-translational modification Phosphothreonine. The PHD-type 1 zinc finger occupies 370-417 (QDYCEVCQQGGEIILCDTCPRAYHMVCLDPDMEKAPEGKWSCPHCEKE). S428 is modified (phosphoserine). The PHD-type 2 zinc-finger motif lies at 449–496 (MEFCRVCKDGGELLCCDTCPSSYHIHCLNPPLPEIPNGEWLCPRCTCP). The 101-residue stretch at 494–594 (TCPALKGKVQ…SGDFGGDEEK (101 aa)) folds into the Chromo 1 domain. Disordered regions lie at residues 510–537 (WGQPPSPTPVPRPPDADPNTPSPKPLEG) and 578–603 (NDMDEPPSGDFGGDEEKSRKRKNKDP). The segment covering 513–522 (PPSPTPVPRP) has biased composition (pro residues). Residue S515 is modified to Phosphoserine. Residues T517 and T529 each carry the phosphothreonine modification. At S531 the chain carries Phosphoserine. Glycyl lysine isopeptide (Lys-Gly) (interchain with G-Cter in SUMO2) cross-links involve residues K618 and K696. A Chromo 2 domain is found at 622 to 697 (MMIHRILNHS…KLKKVKLRKL (76 aa)). A Phosphothreonine modification is found at T703. A Glycyl lysine isopeptide (Lys-Gly) (interchain with G-Cter in SUMO1); alternate cross-link involves residue K711. K711 is covalently cross-linked (Glycyl lysine isopeptide (Lys-Gly) (interchain with G-Cter in SUMO2); alternate). A Helicase ATP-binding domain is found at 738–922 (RFSWAQGTDT…FHLLNFLTPE (185 aa)). Position 751–758 (751–758 (DEMGLGKT)) interacts with ATP. The DEAH box motif lies at 873–876 (DEAH). In terms of domain architecture, Helicase C-terminal spans 1054–1203 (LLQKMLKNLK…LTHLVVRPGL (150 aa)). S1209 carries the phosphoserine modification. Glycyl lysine isopeptide (Lys-Gly) (interchain with G-Cter in SUMO2) cross-links involve residues K1212, K1228, K1239, and K1304. S1308, S1349, and S1370 each carry phosphoserine. 2 disordered regions span residues 1344–1401 (NYND…KPLP) and 1525–1562 (EENKKMSQPGSPSPKTPTPSTPGDTQPNTPAPVPPAED). Residues K1528 and K1529 each participate in a glycyl lysine isopeptide (Lys-Gly) (interchain with G-Cter in SUMO2) cross-link. Phosphoserine occurs at positions 1531, 1535, and 1537. Residues 1535–1544 (SPSPKTPTPS) are compositionally biased toward pro residues. A phosphothreonine mark is found at T1542, T1549, and T1553. A Glycyl lysine isopeptide (Lys-Gly) (interchain with G-Cter in SUMO2) cross-link involves residue K1565. A Phosphoserine modification is found at S1570. A compositionally biased stretch (basic and acidic residues) spans 1570–1584 (SLKEEESIEGEKEVK). Disordered stretches follow at residues 1570-1589 (SLKEEESIEGEKEVKSTAPE) and 1594-1644 (CTQA…VEKV). K1572 is covalently cross-linked (Glycyl lysine isopeptide (Lys-Gly) (interchain with G-Cter in SUMO2)). Phosphoserine is present on S1576. Residues 1577-1912 (IEGEKEVKST…PTPQQVAQQQ (336 aa)) form a required for interaction with PCNT region. A Glycyl lysine isopeptide (Lys-Gly) (interchain with G-Cter in SUMO2) cross-link involves residue K1584. Position 1602 is a phosphoserine (S1602). A compositionally biased stretch (basic and acidic residues) spans 1603–1644 (EDEKVVVEPPEGEEKVEKAEVKERTEEPMETEPKGAADVEKV). Residues K1606, K1617, and K1636 each participate in a glycyl lysine isopeptide (Lys-Gly) (interchain with G-Cter in SUMO2) cross-link. K1643 is covalently cross-linked (Glycyl lysine isopeptide (Lys-Gly) (interchain with G-Cter in SUMO2); alternate). K1643 is modified (N6-acetyllysine; alternate). K1647 is covalently cross-linked (Glycyl lysine isopeptide (Lys-Gly) (interchain with G-Cter in SUMO2)). At T1653 the chain carries Phosphothreonine. Residues K1660 and K1670 each participate in a glycyl lysine isopeptide (Lys-Gly) (interchain with G-Cter in SUMO2) cross-link. T1679 bears the Phosphothreonine mark. Residues K1687 and K1865 each participate in a glycyl lysine isopeptide (Lys-Gly) (interchain with G-Cter in SUMO2) cross-link.

Belongs to the SNF2/RAD54 helicase family. As to quaternary structure, component of the nucleosome remodeling and deacetylase (NuRD) repressor complex, composed of core proteins MTA1, MTA2, MTA3, RBBP4, RBBP7, HDAC1, HDAC2, MBD2, MBD3, and peripherally associated proteins CDK2AP1, CDK2AP2, GATAD2A, GATAD2B, CHD3, CHD4 and CHD5. The exact stoichiometry of the NuRD complex is unknown, and some subunits such as MBD2 and MBD3, GATAD2A and GATAD2B, and CHD3, CHD4 and CHD5 define mutually exclusive NuRD complexes. Interacts with IKFZ1; the interaction is direct and when in part of the NuRD complex. Part of a complex containing ATR and HDAC2. Interacts with HDAC2; the interaction is direct. Interacts with the cohesin complex component RAD21; the interaction is direct. Interacts with the ISWI chromatin remodeling complex component SMARCA5; the interaction is direct. Interacts with ZGPAT; the interaction is direct. Interacts with ZMYND8; the interaction is direct, appears to occur with monomeric ZMYND8, and is increased following DNA damage. Interacts with BCL6. Interacts with BRD4. Interacts with CBX1. Interacts with CBX3. Interacts with CBX5. Interacts with GATAD2A. Interacts with HDAC1. Interacts with KLF1; the interaction depends on sumoylation of KLF1, and leads to its transcriptional repression. Interacts with MTA1. Interacts with PCNT. Interacts with RBBP7. Interacts with SETX. Interacts with TRIM27. Interacts with histone H3. Interacts with histone H4. Does not interact with PWWP2A. Does not interact with PWWP2B. Interacts (via KIKL motif) with BRD3 (via NET domain). It depends on Zn(2+) as a cofactor. In terms of tissue distribution, widely expressed.

The protein localises to the nucleus. The protein resides in the cytoplasm. It localises to the cytoskeleton. Its subcellular location is the microtubule organizing center. It is found in the centrosome. The catalysed reaction is ATP + H2O = ADP + phosphate + H(+). In terms of biological role, ATP-dependent chromatin-remodeling factor that binds and distorts nucleosomal DNA. Acts as a component of the histone deacetylase NuRD complex which participates in the remodeling of chromatin. Localizes to acetylated damaged chromatin in a ZMYND8-dependent manner, to promote transcriptional repression and double-strand break repair by homologous recombination. Involved in neurogenesis. This chain is Chromodomain-helicase-DNA-binding protein 4 (CHD4), found in Homo sapiens (Human).